Reading from the N-terminus, the 161-residue chain is Nucleotide-binding protein Bd0338 (161 aa).

This sequence belongs to the YajQ family.

Its function is as follows. Nucleotide-binding protein. The sequence is that of Nucleotide-binding protein Bd0338 from Bdellovibrio bacteriovorus (strain ATCC 15356 / DSM 50701 / NCIMB 9529 / HD100).